Reading from the N-terminus, the 184-residue chain is ATP synthase subunit b, chloroplastic (184 aa).

The chain crosses the membrane as a helical span at residues 27–49 (FATNPINLSVVLGVLIFFGKGVL).

The protein belongs to the ATPase B chain family. As to quaternary structure, F-type ATPases have 2 components, F(1) - the catalytic core - and F(0) - the membrane proton channel. F(1) has five subunits: alpha(3), beta(3), gamma(1), delta(1), epsilon(1). F(0) has four main subunits: a(1), b(1), b'(1) and c(10-14). The alpha and beta chains form an alternating ring which encloses part of the gamma chain. F(1) is attached to F(0) by a central stalk formed by the gamma and epsilon chains, while a peripheral stalk is formed by the delta, b and b' chains.

Its subcellular location is the plastid. It localises to the chloroplast thylakoid membrane. Its function is as follows. F(1)F(0) ATP synthase produces ATP from ADP in the presence of a proton or sodium gradient. F-type ATPases consist of two structural domains, F(1) containing the extramembraneous catalytic core and F(0) containing the membrane proton channel, linked together by a central stalk and a peripheral stalk. During catalysis, ATP synthesis in the catalytic domain of F(1) is coupled via a rotary mechanism of the central stalk subunits to proton translocation. In terms of biological role, component of the F(0) channel, it forms part of the peripheral stalk, linking F(1) to F(0). This is ATP synthase subunit b, chloroplastic from Amborella trichopoda.